The primary structure comprises 421 residues: 2',3'-cyclic-nucleotide 3'-phosphodiesterase (421 aa).

A phosphoserine mark is found at S6 and S9. The residue at position 110 (Y110) is a Phosphotyrosine. Phosphoserine is present on S170. Catalysis depends on H251, which acts as the Proton acceptor. Position 253 (T253) interacts with substrate. The active-site Proton donor is the H330. Position 332 (T332) interacts with substrate. Residue S359 is modified to Phosphoserine. Cysteine methyl ester is present on C418. Residue C418 is the site of S-farnesyl cysteine attachment. The propeptide at T419–I421 is removed in mature form.

It belongs to the 2H phosphoesterase superfamily. CNPase family. Exists as monomers and homodimers.

Its subcellular location is the membrane. It localises to the melanosome. The enzyme catalyses a nucleoside 2',3'-cyclic phosphate + H2O = a nucleoside 2'-phosphate + H(+). Functionally, catalyzes the formation of 2'-nucleotide products from 2',3'-cyclic substrates. May participate in RNA metabolism in the myelinating cell, CNP is the third most abundant protein in central nervous system myelin. In Pongo abelii (Sumatran orangutan), this protein is 2',3'-cyclic-nucleotide 3'-phosphodiesterase.